The chain runs to 312 residues: tRNA-cytidine(32) 2-sulfurtransferase (312 aa).

The PP-loop motif signature appears at 47–52 (SGGKDS). [4Fe-4S] cluster contacts are provided by C122, C125, and C213.

It belongs to the TtcA family. As to quaternary structure, homodimer. Mg(2+) is required as a cofactor. Requires [4Fe-4S] cluster as cofactor.

The protein resides in the cytoplasm. It catalyses the reaction cytidine(32) in tRNA + S-sulfanyl-L-cysteinyl-[cysteine desulfurase] + AH2 + ATP = 2-thiocytidine(32) in tRNA + L-cysteinyl-[cysteine desulfurase] + A + AMP + diphosphate + H(+). It participates in tRNA modification. Functionally, catalyzes the ATP-dependent 2-thiolation of cytidine in position 32 of tRNA, to form 2-thiocytidine (s(2)C32). The sulfur atoms are provided by the cysteine/cysteine desulfurase (IscS) system. This Shewanella frigidimarina (strain NCIMB 400) protein is tRNA-cytidine(32) 2-sulfurtransferase.